The following is a 545-amino-acid chain: CTP synthase (545 aa).

The segment at 1-266 is amidoligase domain; it reads MTKNYIFITG…DDYICNYFKL (266 aa). Ser14 lines the CTP pocket. Ser14 lines the UTP pocket. ATP is bound by residues 15–20 and Asp72; that span reads SLGKGI. Positions 72 and 140 each coordinate Mg(2+). Residues 147–149, 187–192, and Lys223 each bind CTP; these read DIE and KTKPTQ. Residues 187–192 and Lys223 contribute to the UTP site; that span reads KTKPTQ. 239–241 contacts ATP; it reads KDV. The Glutamine amidotransferase type-1 domain occupies 291–543; the sequence is VIGIIGKYIK…IKSAGKHKKN (253 aa). Gly352 is a binding site for L-glutamine. The Nucleophile; for glutamine hydrolysis role is filled by Cys379. Residues 380 to 383, Glu403, and Arg471 contribute to the L-glutamine site; that span reads LGMQ. Active-site residues include His516 and Glu518.

This sequence belongs to the CTP synthase family. Homotetramer.

It carries out the reaction UTP + L-glutamine + ATP + H2O = CTP + L-glutamate + ADP + phosphate + 2 H(+). The enzyme catalyses L-glutamine + H2O = L-glutamate + NH4(+). It catalyses the reaction UTP + NH4(+) + ATP = CTP + ADP + phosphate + 2 H(+). Its pathway is pyrimidine metabolism; CTP biosynthesis via de novo pathway; CTP from UDP: step 2/2. Allosterically activated by GTP, when glutamine is the substrate; GTP has no effect on the reaction when ammonia is the substrate. The allosteric effector GTP functions by stabilizing the protein conformation that binds the tetrahedral intermediate(s) formed during glutamine hydrolysis. Inhibited by the product CTP, via allosteric rather than competitive inhibition. Functionally, catalyzes the ATP-dependent amination of UTP to CTP with either L-glutamine or ammonia as the source of nitrogen. Regulates intracellular CTP levels through interactions with the four ribonucleotide triphosphates. This is CTP synthase from Buchnera aphidicola subsp. Acyrthosiphon pisum (strain 5A).